We begin with the raw amino-acid sequence, 463 residues long: Kynureninase 2 (463 aa).

Residues Leu134, Thr135, 162–165, Asp247, His250, and Tyr272 contribute to the pyridoxal 5'-phosphate site; that span reads FPSD. Lys273 is subject to N6-(pyridoxal phosphate)lysine. Pyridoxal 5'-phosphate contacts are provided by Trp312 and Asn340.

It belongs to the kynureninase family. Homodimer. The cofactor is pyridoxal 5'-phosphate.

Its subcellular location is the cytoplasm. The catalysed reaction is L-kynurenine + H2O = anthranilate + L-alanine + H(+). The enzyme catalyses 3-hydroxy-L-kynurenine + H2O = 3-hydroxyanthranilate + L-alanine + H(+). Its pathway is amino-acid degradation; L-kynurenine degradation; L-alanine and anthranilate from L-kynurenine: step 1/1. The protein operates within cofactor biosynthesis; NAD(+) biosynthesis; quinolinate from L-kynurenine: step 2/3. In terms of biological role, catalyzes the cleavage of L-kynurenine (L-Kyn) and L-3-hydroxykynurenine (L-3OHKyn) into anthranilic acid (AA) and 3-hydroxyanthranilic acid (3-OHAA), respectively. This is Kynureninase 2 (bna5-2) from Aspergillus terreus (strain NIH 2624 / FGSC A1156).